Reading from the N-terminus, the 122-residue chain is Large ribosomal subunit protein uL14 (122 aa).

It belongs to the universal ribosomal protein uL14 family. In terms of assembly, part of the 50S ribosomal subunit. Forms a cluster with proteins L3 and L19. In the 70S ribosome, L14 and L19 interact and together make contacts with the 16S rRNA in bridges B5 and B8.

In terms of biological role, binds to 23S rRNA. Forms part of two intersubunit bridges in the 70S ribosome. The protein is Large ribosomal subunit protein uL14 of Natranaerobius thermophilus (strain ATCC BAA-1301 / DSM 18059 / JW/NM-WN-LF).